We begin with the raw amino-acid sequence, 233 residues long: Large ribosomal subunit protein uL1 (233 aa).

It belongs to the universal ribosomal protein uL1 family. As to quaternary structure, part of the 50S ribosomal subunit.

In terms of biological role, binds directly to 23S rRNA. The L1 stalk is quite mobile in the ribosome, and is involved in E site tRNA release. Its function is as follows. Protein L1 is also a translational repressor protein, it controls the translation of the L11 operon by binding to its mRNA. In Novosphingobium aromaticivorans (strain ATCC 700278 / DSM 12444 / CCUG 56034 / CIP 105152 / NBRC 16084 / F199), this protein is Large ribosomal subunit protein uL1.